Here is a 325-residue protein sequence, read N- to C-terminus: Holliday junction branch migration complex subunit RuvB (325 aa).

Residues 1–172 (MENNELLDIT…FGVVFRLEFY (172 aa)) are large ATPase domain (RuvB-L). ATP is bound by residues Leu11, Arg12, Gly53, Lys56, Thr57, Thr58, 119–121 (EDF), Arg162, Tyr172, and Arg209. A Mg(2+)-binding site is contributed by Thr57. Residues 173–243 (NSEELKEIVK…IAQEALIAMD (71 aa)) form a small ATPAse domain (RuvB-S) region. A head domain (RuvB-H) region spans residues 246–325 (DYGLDDMDRK…LKRKIPERLF (80 aa)). DNA contacts are provided by Arg301 and Arg306.

It belongs to the RuvB family. Homohexamer. Forms an RuvA(8)-RuvB(12)-Holliday junction (HJ) complex. HJ DNA is sandwiched between 2 RuvA tetramers; dsDNA enters through RuvA and exits via RuvB. An RuvB hexamer assembles on each DNA strand where it exits the tetramer. Each RuvB hexamer is contacted by two RuvA subunits (via domain III) on 2 adjacent RuvB subunits; this complex drives branch migration. In the full resolvosome a probable DNA-RuvA(4)-RuvB(12)-RuvC(2) complex forms which resolves the HJ.

The protein resides in the cytoplasm. The catalysed reaction is ATP + H2O = ADP + phosphate + H(+). Functionally, the RuvA-RuvB-RuvC complex processes Holliday junction (HJ) DNA during genetic recombination and DNA repair, while the RuvA-RuvB complex plays an important role in the rescue of blocked DNA replication forks via replication fork reversal (RFR). RuvA specifically binds to HJ cruciform DNA, conferring on it an open structure. The RuvB hexamer acts as an ATP-dependent pump, pulling dsDNA into and through the RuvAB complex. RuvB forms 2 homohexamers on either side of HJ DNA bound by 1 or 2 RuvA tetramers; 4 subunits per hexamer contact DNA at a time. Coordinated motions by a converter formed by DNA-disengaged RuvB subunits stimulates ATP hydrolysis and nucleotide exchange. Immobilization of the converter enables RuvB to convert the ATP-contained energy into a lever motion, pulling 2 nucleotides of DNA out of the RuvA tetramer per ATP hydrolyzed, thus driving DNA branch migration. The RuvB motors rotate together with the DNA substrate, which together with the progressing nucleotide cycle form the mechanistic basis for DNA recombination by continuous HJ branch migration. Branch migration allows RuvC to scan DNA until it finds its consensus sequence, where it cleaves and resolves cruciform DNA. The polypeptide is Holliday junction branch migration complex subunit RuvB (Thermodesulfovibrio yellowstonii (strain ATCC 51303 / DSM 11347 / YP87)).